Here is a 386-residue protein sequence, read N- to C-terminus: 3-hydroxyisobutyryl-CoA hydrolase, mitochondrial (386 aa).

The transit peptide at 1–32 directs the protein to the mitochondrion; sequence MGLQGLCRLMSRFNSYKRTNIILQHLKMSNHT. The residue at position 92 (Lys92) is an N6-acetyllysine; alternate. Position 92 is an N6-succinyllysine; alternate (Lys92). Substrate is bound by residues Glu121, Gly146, Glu169, and Asp177. An N6-acetyllysine; alternate modification is found at Lys221. N6-succinyllysine; alternate is present on Lys221. At Ser234 the chain carries Phosphoserine. Residues Lys250 and Lys257 each carry the N6-succinyllysine modification. An N6-acetyllysine; alternate modification is found at Lys297. Lys297 is modified (N6-succinyllysine; alternate). Position 301 is an N6-succinyllysine (Lys301). Position 353 is an N6-acetyllysine; alternate (Lys353). Lys353 bears the N6-succinyllysine; alternate mark. A Phosphoserine modification is found at Ser356. Lys360 and Lys365 each carry N6-acetyllysine. Residue Lys377 is modified to N6-succinyllysine.

This sequence belongs to the enoyl-CoA hydratase/isomerase family.

It is found in the mitochondrion. It catalyses the reaction 3-hydroxy-2-methylpropanoyl-CoA + H2O = 3-hydroxy-2-methylpropanoate + CoA + H(+). Its pathway is amino-acid degradation; L-valine degradation. Functionally, hydrolyzes 3-hydroxyisobutyryl-CoA (HIBYL-CoA), a saline catabolite. Has high activity toward isobutyryl-CoA. Could be an isobutyryl-CoA dehydrogenase that functions in valine catabolism. Also hydrolyzes 3-hydroxypropanoyl-CoA. In Bos taurus (Bovine), this protein is 3-hydroxyisobutyryl-CoA hydrolase, mitochondrial (HIBCH).